Reading from the N-terminus, the 761-residue chain is Zinc finger protein 287 (761 aa).

The 83-residue stretch at 49 to 131 folds into the SCAN box domain; it reads RQNFRNFPYP…TLVEDLTQIL (83 aa). Residues 134 to 154 are disordered; sequence EAPQNSTLSQDTPEEDPRGKH. Positions 170 to 238 constitute a KRAB domain; the sequence is MTFKDVAVDI…IKEILEGPSP (69 aa). 14 C2H2-type zinc fingers span residues 368-390, 396-418, 424-446, 452-474, 480-502, 508-530, 536-558, 564-586, 592-614, 620-642, 648-670, 676-698, 704-726, and 732-754; these read YKCN…QSTH, YECE…QRMH, YECH…QRIH, YKCD…QRTH, YKCL…QRVH, YICN…QKIH, YKCN…QRIH, YKCN…QTTH, YICN…HRTH, YKCS…QRIH, FKCN…QRIH, YKCN…QRTH, and YACR…QRVH.

It belongs to the krueppel C2H2-type zinc-finger protein family.

It is found in the nucleus. Its function is as follows. May be involved in transcriptional regulation. In Pongo pygmaeus (Bornean orangutan), this protein is Zinc finger protein 287.